The primary structure comprises 462 residues: Probable Xaa-Pro aminopeptidase pepP (462 aa).

Aspartate 259, aspartate 270, glutamate 393, and glutamate 433 together coordinate Mn(2+).

It belongs to the peptidase M24B family. The cofactor is Mn(2+).

The enzyme catalyses Release of any N-terminal amino acid, including proline, that is linked to proline, even from a dipeptide or tripeptide.. Its function is as follows. Catalyzes the removal of a penultimate prolyl residue from the N-termini of peptides. The protein is Probable Xaa-Pro aminopeptidase pepP (pepP) of Metarhizium robertsii (strain ARSEF 23 / ATCC MYA-3075) (Metarhizium anisopliae (strain ARSEF 23)).